A 145-amino-acid polypeptide reads, in one-letter code: D-aminoacyl-tRNA deacylase (145 aa).

The Gly-cisPro motif, important for rejection of L-amino acids motif lies at 137-138 (GP).

Belongs to the DTD family. Homodimer.

The protein resides in the cytoplasm. The enzyme catalyses glycyl-tRNA(Ala) + H2O = tRNA(Ala) + glycine + H(+). It catalyses the reaction a D-aminoacyl-tRNA + H2O = a tRNA + a D-alpha-amino acid + H(+). In terms of biological role, an aminoacyl-tRNA editing enzyme that deacylates mischarged D-aminoacyl-tRNAs. Also deacylates mischarged glycyl-tRNA(Ala), protecting cells against glycine mischarging by AlaRS. Acts via tRNA-based rather than protein-based catalysis; rejects L-amino acids rather than detecting D-amino acids in the active site. By recycling D-aminoacyl-tRNA to D-amino acids and free tRNA molecules, this enzyme counteracts the toxicity associated with the formation of D-aminoacyl-tRNA entities in vivo and helps enforce protein L-homochirality. In Lactobacillus acidophilus (strain ATCC 700396 / NCK56 / N2 / NCFM), this protein is D-aminoacyl-tRNA deacylase.